We begin with the raw amino-acid sequence, 201 residues long: CASP-like protein 2A1 (201 aa).

Residues 1–27 (MEKRDKGSSPMATMMGSRDENEDVENT) form a disordered region. At 1–30 (MEKRDKGSSPMATMMGSRDENEDVENTTRT) the chain is on the cytoplasmic side. A helical membrane pass occupies residues 31-51 (AETMLRLVPMALCVSALVVML). The Extracellular portion of the chain corresponds to 52 to 72 (KNTQTNDYGSLSYSDLGAFRY). Residues 73–93 (LVHVNGICAGYSLLSAVIVAM) traverse the membrane as a helical segment. The Cytoplasmic portion of the chain corresponds to 94-101 (PRASTMPR). The helical transmembrane segment at 102 to 122 (AWAFFLLDQVLTYVILAAGTV) threads the bilayer. The Extracellular portion of the chain corresponds to 123-152 (STEVLYLASKGDTTITWSEACVSFGGFCHK). Residues 153-173 (ALISIVITFVVVICYAALSLL) traverse the membrane as a helical segment. Residues 174 to 201 (SSYKLFSKYDSPVLTYPGKGIEIATFHG) are Cytoplasmic-facing.

The protein belongs to the Casparian strip membrane proteins (CASP) family. As to quaternary structure, homodimer and heterodimers.

It localises to the cell membrane. The sequence is that of CASP-like protein 2A1 from Populus trichocarpa (Western balsam poplar).